The sequence spans 344 residues: Ferrochelatase (344 aa).

Positions 214 and 295 each coordinate Fe cation.

It belongs to the ferrochelatase family.

Its subcellular location is the cytoplasm. It carries out the reaction heme b + 2 H(+) = protoporphyrin IX + Fe(2+). The protein operates within porphyrin-containing compound metabolism; protoheme biosynthesis; protoheme from protoporphyrin-IX: step 1/1. Functionally, catalyzes the ferrous insertion into protoporphyrin IX. This Rhizobium leguminosarum bv. trifolii (strain WSM2304) protein is Ferrochelatase.